Reading from the N-terminus, the 185-residue chain is Urease accessory protein UreE (185 aa).

Positions 153 to 185 (LRANSAQGHGHSHSHSHDHHGYHHHGDGHWHKH) are disordered. Over residues 162-175 (GHSHSHSHDHHGYH) the composition is skewed to basic residues. The segment covering 176–185 (HHGDGHWHKH) has biased composition (basic and acidic residues).

The protein belongs to the UreE family.

It is found in the cytoplasm. Involved in urease metallocenter assembly. Binds nickel. Probably functions as a nickel donor during metallocenter assembly. This chain is Urease accessory protein UreE, found in Haemophilus influenzae (strain PittEE).